The sequence spans 335 residues: Stearoyl-CoA desaturase 5 (335 aa).

At 1–54 the chain is on the cytoplasmic side; sequence MPGPAVDAEKVPFRSAKEEIRAGVGVEGSEGGGGGGGRERPGARGHRQDIVWRN. The segment at 24–44 is disordered; the sequence is VGVEGSEGGGGGGGRERPGAR. Residues 25–36 are compositionally biased toward gly residues; it reads GVEGSEGGGGGG. A substrate-binding site is contributed by Asn54. A helical transmembrane segment spans residues 55 to 75; that stretch reads VFLMSLLHLAAVYSLVLIPKA. Residues 76–77 are Lumenal-facing; sequence QP. The chain crosses the membrane as a helical span at residues 78–98; that stretch reads LTLLWAYFCFLLTALGVTAGA. Positions 99 and 104 each coordinate Fe cation. Residues 99–104 carry the Histidine box-1 motif; that stretch reads HRLWSH. Residues 99–198 lie on the Cytoplasmic side of the membrane; it reads HRLWSHRSYK…VVRFQRKYYK (100 aa). Substrate-binding residues include Asn127, Arg134, and Asp135. 3 residues coordinate Fe cation: His136, His139, and His140. The short motif at 136 to 140 is the Histidine box-2 element; sequence HRVHH. 2 residues coordinate substrate: Arg167 and Lys168. Residues 199-219 traverse the membrane as a helical segment; it reads ITVVLMCFVVPTLVPWYIWGE. Over 220–227 the chain is Lumenal; it reads SLWNSYFL. A helical membrane pass occupies residues 228 to 247; the sequence is ASILRYTISLNVTWLVNSVA. Trp241 contacts substrate. 4 residues coordinate Fe cation: His248, His277, His280, and His281. The Cytoplasmic portion of the chain corresponds to 248 to 335; the sequence is HMYGNRPYDK…RKARTGDGSA (88 aa). Positions 277 to 281 match the Histidine box-3 motif; the sequence is HNYHH.

Belongs to the fatty acid desaturase type 1 family. In terms of assembly, may self-associate and form homodimers. The cofactor is Fe(2+). In terms of tissue distribution, detected in brain.

It localises to the endoplasmic reticulum membrane. It catalyses the reaction octadecanoyl-CoA + 2 Fe(II)-[cytochrome b5] + O2 + 2 H(+) = (9Z)-octadecenoyl-CoA + 2 Fe(III)-[cytochrome b5] + 2 H2O. It carries out the reaction hexadecanoyl-CoA + 2 Fe(II)-[cytochrome b5] + O2 + 2 H(+) = (9Z)-hexadecenoyl-CoA + 2 Fe(III)-[cytochrome b5] + 2 H2O. Its function is as follows. Stearoyl-CoA desaturase that utilizes O(2) and electrons from reduced cytochrome b5 to introduce the first double bond into saturated fatty acyl-CoA substrates. Catalyzes the insertion of a cis double bond at the delta-9 position into fatty acyl-CoA substrates including palmitoyl-CoA and stearoyl-CoA. Gives rise to a mixture of 16:1 and 18:1 unsaturated fatty acids. Involved in neuronal cell proliferation and differentiation through down-regulation of EGFR/AKT/MAPK and Wnt signaling pathways. This chain is Stearoyl-CoA desaturase 5 (SCD5), found in Bos taurus (Bovine).